The chain runs to 525 residues: ATP-dependent RNA helicase dbp8 (525 aa).

Over residues 1–29 (MAPLSTPESISREISVSSDASADESTSLD) the composition is skewed to polar residues. The disordered stretch occupies residues 1-76 (MAPLSTPESI…TNATSSRKDD (76 aa)). Positions 95–123 (NSFKALNVAPWLVGSLTTMAVRKPTAIQR) match the Q motif motif. In terms of domain architecture, Helicase ATP-binding spans 126-305 (IPEILKGRDC…SMPQTPGKPP (180 aa)). Residue 139–146 (SRTGSGKT) coordinates ATP. The DEAD box motif lies at 248–251 (DEAD). One can recognise a Helicase C-terminal domain in the interval 337-484 (AFLHVLLSTE…EYEEEGVNLE (148 aa)).

The protein belongs to the DEAD box helicase family. DDX49/DBP8 subfamily.

It localises to the nucleus. It is found in the nucleolus. The catalysed reaction is ATP + H2O = ADP + phosphate + H(+). Functionally, ATP-binding RNA helicase involved in 40S ribosomal subunit biogenesis and is required for the normal formation of 18S rRNAs through pre-rRNA processing at A0, A1 and A2 sites. Required for vegetative growth. The chain is ATP-dependent RNA helicase dbp8 (dbp8) from Emericella nidulans (strain FGSC A4 / ATCC 38163 / CBS 112.46 / NRRL 194 / M139) (Aspergillus nidulans).